Here is a 54-residue protein sequence, read N- to C-terminus: Photoreceptor disk component PRCD (54 aa).

The S-palmitoyl cysteine moiety is linked to residue C2. The segment at Q24–K54 is disordered. Residues R38–K54 are compositionally biased toward basic and acidic residues.

This sequence belongs to the PRCD family. Interacts with RHO/rhodopsin; the interaction promotes PRCD stability. Post-translationally, palmitoylated at Cys-2. Palmitoylation is essential for protein stability and trafficking to the photoreceptor outer segment, but does not appear to be essential for membrane localization. Probably palmitoylated by ZDHHC3. In terms of processing, phosphorylated. Expressed in retina.

It localises to the cell projection. The protein localises to the cilium. It is found in the photoreceptor outer segment. Its subcellular location is the membrane. The protein resides in the endoplasmic reticulum. It localises to the golgi apparatus. Functionally, involved in vision. This is Photoreceptor disk component PRCD from Canis lupus familiaris (Dog).